The chain runs to 320 residues: tRNA U34 carboxymethyltransferase (320 aa).

Residues lysine 89, tryptophan 103, lysine 108, glycine 128, 150 to 152 (DPT), 179 to 180 (LE), methionine 194, tyrosine 198, and arginine 313 each bind carboxy-S-adenosyl-L-methionine.

It belongs to the class I-like SAM-binding methyltransferase superfamily. CmoB family. Homotetramer.

The catalysed reaction is carboxy-S-adenosyl-L-methionine + 5-hydroxyuridine(34) in tRNA = 5-carboxymethoxyuridine(34) in tRNA + S-adenosyl-L-homocysteine + H(+). Functionally, catalyzes carboxymethyl transfer from carboxy-S-adenosyl-L-methionine (Cx-SAM) to 5-hydroxyuridine (ho5U) to form 5-carboxymethoxyuridine (cmo5U) at position 34 in tRNAs. The protein is tRNA U34 carboxymethyltransferase of Haemophilus ducreyi (strain 35000HP / ATCC 700724).